Reading from the N-terminus, the 142-residue chain is Large ribosomal subunit protein uL11 (142 aa).

The protein belongs to the universal ribosomal protein uL11 family. In terms of assembly, part of the ribosomal stalk of the 50S ribosomal subunit. Interacts with L10 and the large rRNA to form the base of the stalk. L10 forms an elongated spine to which L12 dimers bind in a sequential fashion forming a multimeric L10(L12)X complex. Post-translationally, one or more lysine residues are methylated.

Its function is as follows. Forms part of the ribosomal stalk which helps the ribosome interact with GTP-bound translation factors. This Desulforudis audaxviator (strain MP104C) protein is Large ribosomal subunit protein uL11.